The chain runs to 333 residues: HTH-type transcriptional regulator Cphy_2742 (333 aa).

Residues 1 to 55 form the HTH lacI-type domain; sequence MNIYDVSQKAGVSIATVSRVINGNPNVSEKTKQKVLDVMKEIGYTPNVFARGLGL. A DNA-binding region (H-T-H motif) is located at residues 3–22; that stretch reads IYDVSQKAGVSIATVSRVIN.

The protein localises to the cytoplasm. Its function is as follows. Involved in control of pectin and galacturonic acid metabolism. Probably represses a comprehensive set of pectin fermentation genes by binding a conserved palindrome at or downstream of their transcription start site to block transcription. In the presence of galacturonic acid may activate transcription of acetate synthesis and other aspects of carbon metabolism. This chain is HTH-type transcriptional regulator Cphy_2742, found in Lachnoclostridium phytofermentans (strain ATCC 700394 / DSM 18823 / ISDg) (Clostridium phytofermentans).